The chain runs to 289 residues: BTB/POZ domain-containing protein KCTD7 (289 aa).

The interval 1–35 (MVVVTGREPDSRRQDGAMSSSDAEDDFLEPATPTA) is disordered. The 99-residue stretch at 51-149 (EVVPLNIGGA…QLENMQPLKG (99 aa)) folds into the BTB domain.

Interacts with CUL3.

The protein localises to the cell membrane. It is found in the cytoplasm. It localises to the cytosol. Its function is as follows. May be involved in the control of excitability of cortical neurons. This Homo sapiens (Human) protein is BTB/POZ domain-containing protein KCTD7 (KCTD7).